The following is a 64-amino-acid chain: Frontoxin IV (64 aa).

Intrachain disulfides connect Cys-3/Cys-24, Cys-6/Cys-11, Cys-17/Cys-41, Cys-45/Cys-57, and Cys-58/Cys-63.

Expressed by the venom gland.

Its subcellular location is the secreted. Produces peripheral paralysis by blocking neuromuscular transmission at the postsynaptic site. Binds to the muscular nicotinic acetylcholine receptor (nAChR). In Micrurus frontalis (Coral snake), this protein is Frontoxin IV.